A 657-amino-acid polypeptide reads, in one-letter code: DNA ligase (657 aa).

Residue 80-81 (SL) coordinates NAD(+). The active-site N6-AMP-lysine intermediate is lysine 104. Residues arginine 125, glutamate 159, and lysine 297 each contribute to the NAD(+) site. Zn(2+) contacts are provided by cysteine 386, cysteine 389, cysteine 406, and cysteine 411. In terms of domain architecture, BRCT spans 571–657 (QSEQIFENLN…EWLNNGVRPE (87 aa)).

This sequence belongs to the NAD-dependent DNA ligase family. LigA subfamily. It depends on Mg(2+) as a cofactor. Mn(2+) serves as cofactor.

The catalysed reaction is NAD(+) + (deoxyribonucleotide)n-3'-hydroxyl + 5'-phospho-(deoxyribonucleotide)m = (deoxyribonucleotide)n+m + AMP + beta-nicotinamide D-nucleotide.. DNA ligase that catalyzes the formation of phosphodiester linkages between 5'-phosphoryl and 3'-hydroxyl groups in double-stranded DNA using NAD as a coenzyme and as the energy source for the reaction. It is essential for DNA replication and repair of damaged DNA. This is DNA ligase from Ruminiclostridium cellulolyticum (strain ATCC 35319 / DSM 5812 / JCM 6584 / H10) (Clostridium cellulolyticum).